Reading from the N-terminus, the 439-residue chain is ATP-dependent RNA helicase RhlB (439 aa).

The short motif at 9–37 (QKFADLPLHPEVKQALAENGFEFCTPIQA) is the Q motif element. The region spanning 40–219 (LPVLLQSKDI…YDHMNDPVKV (180 aa)) is the Helicase ATP-binding domain. 53–60 (AQTGTGKT) contributes to the ATP binding site. The DEAD box motif lies at 165 to 168 (DEAD). The Helicase C-terminal domain maps to 243-390 (KIRLLLTLIE…VSNYDRDALL (148 aa)). Positions 395-439 (PPVKIHRKHPAGARNLRERSGAGRPQGAHRSGGRPPRHDRTRRQP) are disordered. Positions 425-439 (SGGRPPRHDRTRRQP) are enriched in basic residues.

It belongs to the DEAD box helicase family. RhlB subfamily. In terms of assembly, component of the RNA degradosome, which is a multiprotein complex involved in RNA processing and mRNA degradation.

The protein localises to the cytoplasm. It catalyses the reaction ATP + H2O = ADP + phosphate + H(+). DEAD-box RNA helicase involved in RNA degradation. Has RNA-dependent ATPase activity and unwinds double-stranded RNA. The chain is ATP-dependent RNA helicase RhlB from Shewanella sp. (strain MR-4).